Consider the following 428-residue polypeptide: Oxysterol-binding protein 9 (428 aa).

The span at 1 to 11 (MTEVQSITTSG) shows a compositional bias: polar residues. 2 disordered regions span residues 1–32 (MTEV…STTN) and 396–428 (ALIE…KNQK). Residues 18–32 (SPSSSSSSISSSTTN) are compositionally biased toward low complexity. Residues 389–422 (EEAKKYKALIEDNQRKQKKEKDEKLKKDEKLKKE) adopt a coiled-coil conformation.

This sequence belongs to the OSBP family.

The protein is Oxysterol-binding protein 9 (osbI) of Dictyostelium discoideum (Social amoeba).